The chain runs to 190 residues: MKKVSPSYLKHHFLIAMPHMHDENFAQTLTYIVEHNANGAMGLVINRPQSLTLADVLEQLRPELPAPRHCQDIVIHTGGPVQTDRGFVLHPSGQTFQATVNLPGGISLSTSQDVLFSIADGYGPDQNVITLGYAGWDAGQLDAEMADNAWLTCSFDPAILFDVDSDQRLEAAARRLGINLNLISTQAGHA.

It belongs to the UPF0301 (AlgH) family.

In Pseudomonas syringae pv. syringae (strain B728a), this protein is UPF0301 protein Psyr_0485.